Consider the following 293-residue polypeptide: tRNA pseudouridine synthase A (293 aa).

D60 acts as the Nucleophile in catalysis. Position 118 (Y118) interacts with substrate.

It belongs to the tRNA pseudouridine synthase TruA family. In terms of assembly, homodimer.

The enzyme catalyses uridine(38/39/40) in tRNA = pseudouridine(38/39/40) in tRNA. Functionally, formation of pseudouridine at positions 38, 39 and 40 in the anticodon stem and loop of transfer RNAs. This Rippkaea orientalis (strain PCC 8801 / RF-1) (Cyanothece sp. (strain PCC 8801)) protein is tRNA pseudouridine synthase A.